The sequence spans 345 residues: MTTRLADIAAQAGVSEATVSRVLNGKPGVAATTRQSVLAALDVLGYERPVRLRRRSAGLVGLVTPELENPIFPAFAQVIGQALTRQGYTPVLATQTPGGSTEDELTEMLVDRGVAGIIYVSGLHADTTADMQRYERLGGRGVPFVLVDGFSSQVQAPFISPDDRAAMSLAVTHLVSLGHTRIGLALGPKRFVPVQRKIEGFVRTVQEPVGAERRSTVEKELVQHSLYTLEGGQAAASALIGRDCTAVVCASDMMALGAIRAARQLGLDVPKDVSVVGFDDSPLIAFTDPPLTTVRKPVPAMGQAAVRTLLEEIGGTPAPHSEFVFMPELVVRGSTASAPGERGRP.

An HTH lacI-type domain is found at 1–58 (MTTRLADIAAQAGVSEATVSRVLNGKPGVAATTRQSVLAALDVLGYERPVRLRRRSAG). Positions 5–24 (LADIAAQAGVSEATVSRVLN) form a DNA-binding region, H-T-H motif.

Functionally, transcription repressor involved in control of expression of alpha-amylase and chitinase genes and of actinorhodin production. The protein is HTH-type transcriptional regulator reg1 (reg1) of Streptomyces lividans.